The following is a 276-amino-acid chain: Pantothenate synthetase (276 aa).

26 to 33 (MGYLHEGH) is an ATP binding site. The active-site Proton donor is His-33. Gln-57 lines the (R)-pantoate pocket. Gln-57 is a beta-alanine binding site. Position 142 to 145 (142 to 145 (GLKD)) interacts with ATP. A (R)-pantoate-binding site is contributed by Gln-148. Residues Ile-171 and 179–182 (KSSR) contribute to the ATP site.

The protein belongs to the pantothenate synthetase family. As to quaternary structure, homodimer.

It localises to the cytoplasm. The catalysed reaction is (R)-pantoate + beta-alanine + ATP = (R)-pantothenate + AMP + diphosphate + H(+). The protein operates within cofactor biosynthesis; (R)-pantothenate biosynthesis; (R)-pantothenate from (R)-pantoate and beta-alanine: step 1/1. In terms of biological role, catalyzes the condensation of pantoate with beta-alanine in an ATP-dependent reaction via a pantoyl-adenylate intermediate. In Exiguobacterium sp. (strain ATCC BAA-1283 / AT1b), this protein is Pantothenate synthetase.